The primary structure comprises 109 residues: FAD assembly factor SdhE (109 aa).

The tract at residues 1–22 (MQDNFTASSPSSSSSASGVAED) is disordered. A compositionally biased stretch (low complexity) spans 7 to 17 (ASSPSSSSSAS).

This sequence belongs to the SdhE FAD assembly factor family.

It localises to the cytoplasm. In terms of biological role, an FAD assembly protein, which accelerates covalent attachment of the cofactor into other proteins. Plays an essential role in the assembly of succinate dehydrogenase (SDH, respiratory complex II), an enzyme complex that is a component of both the tricarboxylic acid cycle and the electron transport chain, and which couples the oxidation of succinate to fumarate with the reduction of ubiquinone (coenzyme Q) to ubiquinol. Required for flavinylation of SdhA, when the SDH operon and this gene are overexpressed in G.oxydans. Flavinylation of SdhA is detected only in the presence of sdhE. This chain is FAD assembly factor SdhE, found in Acetobacter pasteurianus (strain NBRC 105184 / IFO 3283-01).